Here is a 1416-residue protein sequence, read N- to C-terminus: Gag-Pro-Pol polyprotein (1416 aa).

Gly-2 is lipidated: N-myristoyl glycine; by host. A PPXY motif motif is present at residues 100-103; it reads PPPY. 2 CCHC-type zinc fingers span residues 345–362 and 370–387; these read GPCY…DCPT and GPCP…DCPT. In terms of domain architecture, Peptidase A2 spans 447-525; that stretch reads ALMLVDTGAE…DKWQILGRDV (79 aa). The active-site Protease; shared with dimeric partner is Asp-452. Residues 586–776 form the Reverse transcriptase domain; it reads LEAGYISPWD…SPVPFLGQMV (191 aa). Positions 652, 727, 728, 1005, 1036, 1057, 1118, 1190, and 1247 each coordinate Mg(2+). An RNase H type-1 domain is found at 996–1126; it reads IPAALCLFSD…VDQLLPLETP (131 aa). The Integrase catalytic domain maps to 1179 to 1343; sequence RGWAPNHIWQ…SPPLAVISEG (165 aa). The segment at residues 1352 to 1400 is a DNA-binding region (integrase-type); it reads KLFLYKLPGQNNRRWLGPLPALVEASGGALLATNPPVWVPWRLLKAFKC.

Belongs to the retroviral Pol polyprotein family. In terms of assembly, homodimer; the homodimers are part of the immature particles. Interacts with human TSG101 and NEDD4; these interactions are essential for budding and release of viral particles. As to quaternary structure, homodimer; further assembles as homohexamers. Mg(2+) serves as cofactor. Phosphorylation of the matrix protein p15 by MAPK1 seems to play a role in budding. In terms of processing, myristoylated. Myristoylation of the matrix (MA) domain mediates the transport and binding of Gag polyproteins to the host plasma membrane and is required for the assembly of viral particles. Post-translationally, specific enzymatic cleavages by the viral protease yield mature proteins. The polyprotein is cleaved during and after budding, this process is termed maturation. The protease is autoproteolytically processed at its N- and C-termini.

Its subcellular location is the virion. The catalysed reaction is Endonucleolytic cleavage to 5'-phosphomonoester.. It carries out the reaction DNA(n) + a 2'-deoxyribonucleoside 5'-triphosphate = DNA(n+1) + diphosphate. Its function is as follows. The matrix domain targets Gag, Gag-Pro and Gag-Pro-Pol polyproteins to the plasma membrane via a multipartite membrane binding signal, that includes its myristoylated N-terminus. Matrix protein. Functionally, forms the spherical core of the virus that encapsulates the genomic RNA-nucleocapsid complex. In terms of biological role, binds strongly to viral nucleic acids and promote their aggregation. Also destabilizes the nucleic acids duplexes via highly structured zinc-binding motifs. Its function is as follows. The aspartyl protease mediates proteolytic cleavages of Gag and Gag-Pol polyproteins during or shortly after the release of the virion from the plasma membrane. Cleavages take place as an ordered, step-wise cascade to yield mature proteins. This process is called maturation. Displays maximal activity during the budding process just prior to particle release from the cell. RT is a multifunctional enzyme that converts the viral RNA genome into dsDNA in the cytoplasm, shortly after virus entry into the cell. This enzyme displays a DNA polymerase activity that can copy either DNA or RNA templates, and a ribonuclease H (RNase H) activity that cleaves the RNA strand of RNA-DNA heteroduplexes in a partially processive 3' to 5'-endonucleasic mode. Conversion of viral genomic RNA into dsDNA requires many steps. A tRNA-Pro binds to the primer-binding site (PBS) situated at the 5'-end of the viral RNA. RT uses the 3' end of the tRNA primer to perform a short round of RNA-dependent minus-strand DNA synthesis. The reading proceeds through the U5 region and ends after the repeated (R) region which is present at both ends of viral RNA. The portion of the RNA-DNA heteroduplex is digested by the RNase H, resulting in a ssDNA product attached to the tRNA primer. This ssDNA/tRNA hybridizes with the identical R region situated at the 3' end of viral RNA. This template exchange, known as minus-strand DNA strong stop transfer, can be either intra- or intermolecular. RT uses the 3' end of this newly synthesized short ssDNA to perform the RNA-dependent minus-strand DNA synthesis of the whole template. RNase H digests the RNA template except for a polypurine tract (PPT) situated at the 5' end of the genome. It is not clear if both polymerase and RNase H activities are simultaneous. RNase H probably can proceed both in a polymerase-dependent (RNA cut into small fragments by the same RT performing DNA synthesis) and a polymerase-independent mode (cleavage of remaining RNA fragments by free RTs). Secondly, RT performs DNA-directed plus-strand DNA synthesis using the PPT that has not been removed by RNase H as primer. PPT and tRNA primers are then removed by RNase H. The 3' and 5' ssDNA PBS regions hybridize to form a circular dsDNA intermediate. Strand displacement synthesis by RT to the PBS and PPT ends produces a blunt ended, linear dsDNA copy of the viral genome that includes long terminal repeats (LTRs) at both ends. Functionally, catalyzes viral DNA integration into the host chromosome, by performing a series of DNA cutting and joining reactions. The sequence is that of Gag-Pro-Pol polyprotein (pol) from Bos taurus (Bovine).